We begin with the raw amino-acid sequence, 215 residues long: Beta-crystallin A3 (215 aa).

Met1 bears the N-acetylmethionine mark. Residues 1–16 (METQAEQQELETLPTT) are compositionally biased toward low complexity. The segment at 1-29 (METQAEQQELETLPTTKMAQTNPTPGSLG) is disordered. Residues 1–30 (METQAEQQELETLPTTKMAQTNPTPGSLGP) form an N-terminal arm region. Glu2 bears the N-acetylalanine mark. 2 consecutive Beta/gamma crystallin 'Greek key' domains span residues 31–70 (WKIT…KVES) and 71–117 (GAWI…RPIC). Residues Cys82 and Cys117 each carry the S-glutathionyl cysteine; alternate modification. S-methylcysteine; alternate occurs at positions 82 and 117. Residues 118–123 (SANHKE) are connecting peptide. 2 Beta/gamma crystallin 'Greek key' domains span residues 124-165 (SKMT…KIQS) and 166-214 (GAWV…RRIQ). Position 185 is an S-methylcysteine (Cys185).

It belongs to the beta/gamma-crystallin family. Homo/heterodimer, or complexes of higher-order. The structure of beta-crystallin oligomers seems to be stabilized through interactions between the N-terminal arms. Interacts with CRYBA1. Specific cleavages in the N-terminal arm occur during lens maturation and give rise to several truncated forms. Cleavages do not seem to have adverse effects on solubility. In terms of processing, S-methylation and glutathionylation occur in normal young lenses and do not seem to be detrimental.

In terms of biological role, crystallins are the dominant structural components of the vertebrate eye lens. This Homo sapiens (Human) protein is Beta-crystallin A3.